A 132-amino-acid chain; its full sequence is MELPLPEDVASVLYLTPLAAVREVNLWNGAPPPYSMLQLWARVDHAWAKDRVGRSYPTRKSYFKSTRLLPRTLYRQYQSYRDCQCLQETSPFTREVHHTCVQLDPLSPSTDGEHSPSSGSPAVLRQHREIWF.

In terms of biological role, may play a role in infectivity. The sequence is that of Protein p15 from Panicum mosaic virus (strain United States/Kansas 109S) (PMV).